A 96-amino-acid polypeptide reads, in one-letter code: UPF0235 protein PC1_3453 (96 aa).

It belongs to the UPF0235 family.

In Pectobacterium carotovorum subsp. carotovorum (strain PC1), this protein is UPF0235 protein PC1_3453.